The chain runs to 260 residues: UPF0246 protein Bphyt_1375 (260 aa).

This sequence belongs to the UPF0246 family.

The chain is UPF0246 protein Bphyt_1375 from Paraburkholderia phytofirmans (strain DSM 17436 / LMG 22146 / PsJN) (Burkholderia phytofirmans).